We begin with the raw amino-acid sequence, 78 residues long: Beta-defensin 105A (78 aa).

The signal sequence occupies residues 1 to 27; the sequence is MALIKKTFFFLFAMFFILVQLSSGCQA. Disulfide bonds link cysteine 43–cysteine 74, cysteine 53–cysteine 67, and cysteine 57–cysteine 73.

This sequence belongs to the beta-defensin family.

It is found in the secreted. Its function is as follows. Has antimicrobial activity. The sequence is that of Beta-defensin 105A (DEFB105A) from Pan troglodytes (Chimpanzee).